The primary structure comprises 100 residues: MSRLFDSRLADIIRKPVITEKATNALDLNQYTFEVDHRAAKPQIKAAIEALFDVKVIGINTMNPPRRTRRVGKFSGKRSQIKKAIVRLAEGDKIQLFPES.

The protein belongs to the universal ribosomal protein uL23 family. As to quaternary structure, part of the 50S ribosomal subunit. Contacts protein L29, and trigger factor when it is bound to the ribosome.

Functionally, one of the early assembly proteins it binds 23S rRNA. One of the proteins that surrounds the polypeptide exit tunnel on the outside of the ribosome. Forms the main docking site for trigger factor binding to the ribosome. The chain is Large ribosomal subunit protein uL23 from Prochlorococcus marinus subsp. pastoris (strain CCMP1986 / NIES-2087 / MED4).